The following is a 331-amino-acid chain: Meiotically up-regulated gene 172 protein (331 aa).

A coiled-coil region spans residues 72–166 (IKNNEYEKQR…KGNYGLVKAR (95 aa)).

This sequence belongs to the ADIP family.

It is found in the cytoplasm. In terms of biological role, has a role in meiosis. The sequence is that of Meiotically up-regulated gene 172 protein (mug172) from Schizosaccharomyces pombe (strain 972 / ATCC 24843) (Fission yeast).